The chain runs to 106 residues: Urease subunit beta (106 aa).

The protein belongs to the urease beta subunit family. Heterotrimer of UreA (gamma), UreB (beta) and UreC (alpha) subunits. Three heterotrimers associate to form the active enzyme.

The protein localises to the cytoplasm. It carries out the reaction urea + 2 H2O + H(+) = hydrogencarbonate + 2 NH4(+). It participates in nitrogen metabolism; urea degradation; CO(2) and NH(3) from urea (urease route): step 1/1. This is Urease subunit beta from Acinetobacter baumannii (strain SDF).